The primary structure comprises 265 residues: 5'-nucleotidase SurE (265 aa).

Residues Asp8, Asp9, Ser39, and Asn96 each coordinate a divalent metal cation.

Belongs to the SurE nucleotidase family. Requires a divalent metal cation as cofactor.

The protein resides in the cytoplasm. It carries out the reaction a ribonucleoside 5'-phosphate + H2O = a ribonucleoside + phosphate. Functionally, nucleotidase that shows phosphatase activity on nucleoside 5'-monophosphates. This chain is 5'-nucleotidase SurE, found in Dehalococcoides mccartyi (strain ATCC BAA-2100 / JCM 16839 / KCTC 5957 / BAV1).